Reading from the N-terminus, the 206-residue chain is RNA pyrophosphohydrolase (206 aa).

Residues 6–150 (GYRPNVGIVI…KRDVYRKVMK (145 aa)) form the Nudix hydrolase domain. Residues 38–59 (GGINEGENIETAMYRELYEEVG) carry the Nudix box motif. A compositionally biased stretch (basic and acidic residues) spans 162–191 (KPETVEKPRVERTEKRDFQKRDNQKREFRK). The disordered stretch occupies residues 162 to 206 (KPETVEKPRVERTEKRDFQKRDNQKREFRKSARTWNNSHQKGKAQ).

Belongs to the Nudix hydrolase family. RppH subfamily. Requires a divalent metal cation as cofactor.

Functionally, accelerates the degradation of transcripts by removing pyrophosphate from the 5'-end of triphosphorylated RNA, leading to a more labile monophosphorylated state that can stimulate subsequent ribonuclease cleavage. The polypeptide is RNA pyrophosphohydrolase (Actinobacillus pleuropneumoniae serotype 3 (strain JL03)).